An 80-amino-acid chain; its full sequence is Cytochrome c oxidase subunit 7A1, mitochondrial (80 aa).

The transit peptide at 1 to 21 (MLAPRVSQALIRSFSSTARNR) directs the protein to the mitochondrion. Over 22-46 (LKNRVPEKQKLFQEDNGIPVYLKGG) the chain is Mitochondrial matrix. The helical transmembrane segment at 47–75 (VVDHILYRVTMGLCLGGTAYGVYCLAWAS) threads the bilayer. The Mitochondrial intermembrane portion of the chain corresponds to 76–80 (FPRNK).

This sequence belongs to the cytochrome c oxidase VIIa family. Component of the complex IV (CIV, cytochrome c oxidase), a multisubunit enzyme composed of 14 subunits. The complex is composed of a catalytic core of 3 subunits MT-CO1, MT-CO2 and MT-CO3, encoded in the mitochondrial DNA, and 11 supernumerary subunits COX4I1 (or COX4I2), COX5A, COX5B, COX6A2 (or COX6A1), COX6B1 (or COX6B2), COX6C, COX7A1 (or COX7A2), COX7B, COX7C, COX8B and NDUFA4, which are encoded in the nuclear genome. The complex exists as a monomer or a dimer and forms supercomplexes (SCs) in the inner mitochondrial membrane with NADH-ubiquinone oxidoreductase (complex I, CI) and ubiquinol-cytochrome c oxidoreductase (cytochrome b-c1 complex, complex III, CIII), resulting in different assemblies (supercomplex SCI(1)III(2)IV(1) and megacomplex MCI(2)III(2)IV(2)).

It localises to the mitochondrion inner membrane. It participates in energy metabolism; oxidative phosphorylation. Its function is as follows. Component of the mitochondrial respiratory complex IV (CIV, also named cytochrome c oxidase complex), the last enzyme in the mitochondrial electron transport chain which drives oxidative phosphorylation. The CIV complex is the component of the respiratory chain that catalyzes the reduction of oxygen to water. Acts as an assembly factor that specifically drives the homodimerization of CIV complexes, mediating the formation of mitochondrial respiratory supercomplexes (respirasomes) containing two CIV: supercomplxes with two molecules of CIV show improved activity. Despite being highly expressed in brown adipose tissue, not required for thermogenesis. This Saimiri sciureus (Common squirrel monkey) protein is Cytochrome c oxidase subunit 7A1, mitochondrial (COX7A1).